A 191-amino-acid chain; its full sequence is MNHEEQKVETMEQVEAQPVEPTDVDSEVTAEQARIAELEAQLEAAQLASNEERERAIRAVAEMENLRRRAAQDVEKAHKFALEKFAAELLPVLDNLERAIELADKESEELKPMIEGVELTLKSMQSGVAKFGLNPLDPLNQPFDPNAHQAMSMIENGELAPNTVIAVMQKGYELNGRVIRPAMVMVSKAPA.

Over residues 1-10 (MNHEEQKVET) the composition is skewed to basic and acidic residues. A disordered region spans residues 1-28 (MNHEEQKVETMEQVEAQPVEPTDVDSEV).

It belongs to the GrpE family. As to quaternary structure, homodimer.

Its subcellular location is the cytoplasm. Its function is as follows. Participates actively in the response to hyperosmotic and heat shock by preventing the aggregation of stress-denatured proteins, in association with DnaK and GrpE. It is the nucleotide exchange factor for DnaK and may function as a thermosensor. Unfolded proteins bind initially to DnaJ; upon interaction with the DnaJ-bound protein, DnaK hydrolyzes its bound ATP, resulting in the formation of a stable complex. GrpE releases ADP from DnaK; ATP binding to DnaK triggers the release of the substrate protein, thus completing the reaction cycle. Several rounds of ATP-dependent interactions between DnaJ, DnaK and GrpE are required for fully efficient folding. The sequence is that of Protein GrpE from Aeromonas salmonicida (strain A449).